The chain runs to 300 residues: ATP-dependent (S)-NAD(P)H-hydrate dehydratase (300 aa).

In terms of domain architecture, YjeF C-terminal spans 14 to 293 (LLTLFKTIVP…NEISAVFRSD (280 aa)). (6S)-NADPHX is bound by residues Gly114 and 167 to 173 (NAMEFRR). Residues 198–202 (KGVND) and 219–228 (GSGRRCGGQG) each bind ATP. Residue Asp229 coordinates (6S)-NADPHX.

Belongs to the NnrD/CARKD family. Mg(2+) serves as cofactor.

The catalysed reaction is (6S)-NADHX + ATP = ADP + phosphate + NADH + H(+). It catalyses the reaction (6S)-NADPHX + ATP = ADP + phosphate + NADPH + H(+). Catalyzes the dehydration of the S-form of NAD(P)HX at the expense of ATP, which is converted to ADP. Together with NAD(P)HX epimerase, which catalyzes the epimerization of the S- and R-forms, the enzyme allows the repair of both epimers of NAD(P)HX, a damaged form of NAD(P)H that is a result of enzymatic or heat-dependent hydration. The polypeptide is ATP-dependent (S)-NAD(P)H-hydrate dehydratase (Drosophila pseudoobscura pseudoobscura (Fruit fly)).